The following is a 636-amino-acid chain: uncharacterized protein (636 aa).

This is an uncharacterized protein from Bacillus subtilis (strain 168).